The following is a 281-amino-acid chain: Acetyl-coenzyme A carboxylase carboxyl transferase subunit beta (281 aa).

Residues 1-23 form a disordered region; that stretch reads MAWFKREKKGISTSTEEKKEAPD. One can recognise a CoA carboxyltransferase N-terminal domain in the interval 25–281; the sequence is LWNKCPNCKK…LAAFLKMMKN (257 aa). Cys-29, Cys-32, Cys-48, and Cys-51 together coordinate Zn(2+). The segment at 29–51 adopts a C4-type zinc-finger fold; that stretch reads CPNCKKALHSADLLENKYVCQYC.

Belongs to the AccD/PCCB family. As to quaternary structure, acetyl-CoA carboxylase is a heterohexamer composed of biotin carboxyl carrier protein (AccB), biotin carboxylase (AccC) and two subunits each of ACCase subunit alpha (AccA) and ACCase subunit beta (AccD). Zn(2+) is required as a cofactor.

It is found in the cytoplasm. It catalyses the reaction N(6)-carboxybiotinyl-L-lysyl-[protein] + acetyl-CoA = N(6)-biotinyl-L-lysyl-[protein] + malonyl-CoA. It functions in the pathway lipid metabolism; malonyl-CoA biosynthesis; malonyl-CoA from acetyl-CoA: step 1/1. Component of the acetyl coenzyme A carboxylase (ACC) complex. Biotin carboxylase (BC) catalyzes the carboxylation of biotin on its carrier protein (BCCP) and then the CO(2) group is transferred by the transcarboxylase to acetyl-CoA to form malonyl-CoA. In Pedobacter heparinus (strain ATCC 13125 / DSM 2366 / CIP 104194 / JCM 7457 / NBRC 12017 / NCIMB 9290 / NRRL B-14731 / HIM 762-3), this protein is Acetyl-coenzyme A carboxylase carboxyl transferase subunit beta.